Consider the following 1185-residue polypeptide: Mucin-6 (1185 aa).

Disulfide bonds link C1-C132 and C23-C168. The 169-residue stretch at 1-169 (CSTWGGGHFS…KMDDPSEICL (169 aa)) folds into the VWFD 1 domain. A glycan (N-linked (GlcNAc...) (complex) asparagine) is linked at N223. Residues 257 to 312 (CSANQIYEECGSPCIKTCSNPEYSCSSHCTYGCFCPEGTVLDDISKNRTCVHLEQC) form the TIL 1 domain. Positions 350–534 (GRCSLEGGSF…AMERETDPCA (185 aa)) constitute a VWFD 2 domain. Disulfide bonds link C352/C488 and C374/C533. TIL domains are found at residues 619-676 (CTGN…KSHC) and 737-782 (GATC…PEEC). The region spanning 821 to 993 (STCNLYGEGH…NSWKENPLCG (173 aa)) is the VWFD 3 domain. Intrachain disulfides connect C823-C957, C845-C992, C854-C954, and C872-C879. N930 carries N-linked (GlcNAc...) (complex) asparagine glycosylation. Residues 1160-1178 (PTATQPTSPSTSSASTVLT) show a composition bias toward low complexity. Residues 1160 to 1185 (PTATQPTSPSTSSASTVLTETTNPPV) are disordered.

In terms of assembly, multimer; disulfide-linked. N-glycosylated with N-acetylglucosamine (6.7%), N-acetylgalactosamine (0.6%), galactose (1.8%), mannose (4.6%), N-acetylneuraminic acid (1.0%) and sulfate-containing glycans (0.7%).

The protein localises to the secreted. In terms of biological role, ovomucin, the glycoprotein responsible for the gel properties of egg white, is composed for 2 subunits, alpha-ovomucin/MUC5B and beta-ovomucin/MUC6. The polypeptide is Mucin-6 (MUC6) (Gallus gallus (Chicken)).